The sequence spans 152 residues: Probable ribose-5-phosphate isomerase B (152 aa).

10-11 (DH) is a D-ribulose 5-phosphate binding site. C69 functions as the Proton acceptor in the catalytic mechanism. Position 70–74 (70–74 (GTGVG)) interacts with D-ribulose 5-phosphate. H102 functions as the Proton donor in the catalytic mechanism. Residues D103, R113, R136, and R140 each contribute to the D-ribulose 5-phosphate site.

Belongs to the LacAB/RpiB family. Homodimer.

The catalysed reaction is aldehydo-D-ribose 5-phosphate = D-ribulose 5-phosphate. The protein operates within carbohydrate degradation; pentose phosphate pathway; D-ribose 5-phosphate from D-ribulose 5-phosphate (non-oxidative stage): step 1/1. Its function is as follows. Catalyzes the interconversion of ribulose-5-P and ribose-5-P. The chain is Probable ribose-5-phosphate isomerase B from Mycoplasma genitalium (strain ATCC 33530 / DSM 19775 / NCTC 10195 / G37) (Mycoplasmoides genitalium).